We begin with the raw amino-acid sequence, 171 residues long: Galectin-related protein (171 aa).

A Galectin domain is found at 38–170 (PFCGHIKGGM…INGDLQLTKL (133 aa)).

In terms of biological role, does not bind lactose, and may not bind carbohydrates. The sequence is that of Galectin-related protein (lgalsl) from Xenopus tropicalis (Western clawed frog).